The following is a 208-amino-acid chain: Attacin-A (208 aa).

The first 20 residues, Met1–Gly20, serve as a signal peptide directing secretion. The propeptide occupies Gln21–Pro47.

As to expression, hemolymph and fat body.

The protein resides in the secreted. Its function is as follows. Hemolymph antibacterial protein against Gram-negative bacteria. In Glossina morsitans morsitans (Savannah tsetse fly), this protein is Attacin-A.